The sequence spans 213 residues: Glycerol-3-phosphate acyltransferase (213 aa).

6 helical membrane-spanning segments follow: residues 4–24 (IILL…LWIG), 48–68 (ILGV…GTLA), 71–91 (LPLF…LAVI), 113–133 (VILG…IIVL), 144–164 (VIGA…GFIL), and 165–185 (TSYD…IILR).

This sequence belongs to the PlsY family. Probably interacts with PlsX.

The protein resides in the cell membrane. It catalyses the reaction an acyl phosphate + sn-glycerol 3-phosphate = a 1-acyl-sn-glycero-3-phosphate + phosphate. It functions in the pathway lipid metabolism; phospholipid metabolism. In terms of biological role, catalyzes the transfer of an acyl group from acyl-phosphate (acyl-PO(4)) to glycerol-3-phosphate (G3P) to form lysophosphatidic acid (LPA). This enzyme utilizes acyl-phosphate as fatty acyl donor, but not acyl-CoA or acyl-ACP. The sequence is that of Glycerol-3-phosphate acyltransferase from Lactococcus lactis subsp. lactis (strain IL1403) (Streptococcus lactis).